The primary structure comprises 497 residues: Lysine--tRNA ligase (497 aa).

Residues glutamate 409 and glutamate 416 each coordinate Mg(2+).

The protein belongs to the class-II aminoacyl-tRNA synthetase family. In terms of assembly, homodimer. Mg(2+) is required as a cofactor.

It localises to the cytoplasm. It catalyses the reaction tRNA(Lys) + L-lysine + ATP = L-lysyl-tRNA(Lys) + AMP + diphosphate. This chain is Lysine--tRNA ligase, found in Streptococcus pyogenes serotype M6 (strain ATCC BAA-946 / MGAS10394).